We begin with the raw amino-acid sequence, 383 residues long: tRNA-specific 2-thiouridylase MnmA (383 aa).

ATP contacts are provided by residues G9–S16 and M35. The tract at residues N95–D97 is interaction with target base in tRNA. The active-site Nucleophile is C100. C100 and C196 are disulfide-bonded. An ATP-binding site is contributed by G124. Residues K146 to Q148 form an interaction with tRNA region. The Cysteine persulfide intermediate role is filled by C196. The segment at R308–Y309 is interaction with tRNA.

The protein belongs to the MnmA/TRMU family.

The protein resides in the cytoplasm. The catalysed reaction is S-sulfanyl-L-cysteinyl-[protein] + uridine(34) in tRNA + AH2 + ATP = 2-thiouridine(34) in tRNA + L-cysteinyl-[protein] + A + AMP + diphosphate + H(+). In terms of biological role, catalyzes the 2-thiolation of uridine at the wobble position (U34) of tRNA, leading to the formation of s(2)U34. This chain is tRNA-specific 2-thiouridylase MnmA, found in Burkholderia lata (strain ATCC 17760 / DSM 23089 / LMG 22485 / NCIMB 9086 / R18194 / 383).